A 270-amino-acid polypeptide reads, in one-letter code: 23S rRNA (adenosine(1067)-2'-O)-methyltransferase (270 aa).

S-adenosyl-L-methionine is bound by residues Arg-135, Arg-165, Gly-218, Ile-238, and Leu-247.

This sequence belongs to the class IV-like SAM-binding methyltransferase superfamily. RNA methyltransferase TsnR/AvirB family.

It carries out the reaction adenosine(1067) in 23S rRNA + S-adenosyl-L-methionine = 2'-O-methyladenosine(1067) in 23S rRNA + S-adenosyl-L-homocysteine + H(+). Specifically methylates the adenosine-1067 in 23S ribosomal RNA. Confers resistance to antibiotic thiostrepton. This chain is 23S rRNA (adenosine(1067)-2'-O)-methyltransferase, found in Streptomyces laurentii.